The sequence spans 276 residues: MAD2L1-binding protein (276 aa).

The span at 1–10 shows a compositional bias: acidic residues; sequence MAASGEEDMS. The disordered stretch occupies residues 1–30; it reads MAASGEEDMSELSPAAAPNLDWYEKPEETH. The interaction with MAD2L1 stretch occupies residues 49–81; it reads PAEPFCPRDLVPVVFPGPVSQEDCCQFTCELLK.

It belongs to the MAD2L1BP family. In terms of assembly, interacts with MAD2L1.

It localises to the nucleus. The protein resides in the nucleoplasm. The protein localises to the cytoplasm. It is found in the cytoskeleton. Its subcellular location is the spindle. May function to silence the spindle checkpoint and allow mitosis to proceed through anaphase by binding MAD2L1 after it has become dissociated from the MAD2L1-CDC20 complex. In Mus musculus (Mouse), this protein is MAD2L1-binding protein (Mad2l1bp).